Consider the following 388-residue polypeptide: MKRAIIIVLDSVGMGELPDAAKYGDEGSNTLGNIAKNLPDFSLPNLESLGLGNIDGMTGYEPSKNPLGSYGRMAEKSAGKDTTTGHWEIAGLILDKPFPVYPNGFPEDIIKRFEDSIGTKTLGNVPASGTEIIKLLGDEHVKTGYPIVYTSADSVFQIAAHENVIPVERLYDMCRTARNILTGEHAVGRVIARPFIGESGNYKRTDRRKDFSLAPVGKTLLDYAVENGYKVKAVGKIEDIFGGRGITESVHIHDNMDGVDRTLEYMRDDFEGILFTNLVDFDMLYGHRNDIAGYANALKEFDRRIPEILANLREDDLLVITADHGCDPSTESTDHSREYVPLLVYGKKFKSNVNLGTRSTFADVAKTVAHYLGISSNLEGESFLGSIL.

Mn(2+)-binding residues include Asp10, Asp282, His287, Asp323, His324, and His335.

It belongs to the phosphopentomutase family. It depends on Mn(2+) as a cofactor.

The protein localises to the cytoplasm. It catalyses the reaction 2-deoxy-alpha-D-ribose 1-phosphate = 2-deoxy-D-ribose 5-phosphate. The enzyme catalyses alpha-D-ribose 1-phosphate = D-ribose 5-phosphate. It participates in carbohydrate degradation; 2-deoxy-D-ribose 1-phosphate degradation; D-glyceraldehyde 3-phosphate and acetaldehyde from 2-deoxy-alpha-D-ribose 1-phosphate: step 1/2. Its function is as follows. Isomerase that catalyzes the conversion of deoxy-ribose 1-phosphate (dRib-1-P) and ribose 1-phosphate (Rib-1-P) to deoxy-ribose 5-phosphate (dRib-5-P) and ribose 5-phosphate (Rib-5-P), respectively. This Acetivibrio thermocellus (strain ATCC 27405 / DSM 1237 / JCM 9322 / NBRC 103400 / NCIMB 10682 / NRRL B-4536 / VPI 7372) (Clostridium thermocellum) protein is Phosphopentomutase.